Consider the following 508-residue polypeptide: Maturase K (508 aa).

The protein belongs to the intron maturase 2 family. MatK subfamily.

It localises to the plastid. Its subcellular location is the chloroplast. Its function is as follows. Usually encoded in the trnK tRNA gene intron. Probably assists in splicing its own and other chloroplast group II introns. This is Maturase K from Huidobria chilensis (Loasa chilensis).